Here is a 440-residue protein sequence, read N- to C-terminus: Actin-like protein 7A (440 aa).

Residues 1–27 (MSLDAVWAPQTANIGDGPAKKASDQTS) form a disordered region. The tract at residues 36–56 (ASLRDGPAKRAVWVRRDNAEK) is required for interaction with TES.

It belongs to the actin family. Interacts (via N-terminus) with TES (via LIM domain 2). Heterodimer with TES; the heterodimer interacts with ENAH to form a heterotrimer. Interacts with ACTL9. Interacts with CYLC1; the interaction may be relevant for proper acrosome attachment to the nuclear envelope. Detected in testis. Detected at the acrosome of round spermatids (at protein level).

Its subcellular location is the cytoplasm. The protein localises to the cytoskeleton. The protein resides in the golgi apparatus. It localises to the nucleus. Its function is as follows. Essential for normal spermatogenesis and male fertility. Required for normal sperm head morphology, acroplaxome formation, acrosome attachment, and acrosome granule stability. May anchor and stabilize acrosomal adherence to the acroplaxome at least in part by facilitating the presence of F-actin in the subacrosomal space. May play an important role in formation and fusion of Golgi-derived vesicles during acrosome biogenesis. In Rattus norvegicus (Rat), this protein is Actin-like protein 7A (Actl7a).